A 103-amino-acid polypeptide reads, in one-letter code: Large ribosomal subunit protein bL21 (103 aa).

Belongs to the bacterial ribosomal protein bL21 family. In terms of assembly, part of the 50S ribosomal subunit. Contacts protein L20.

In terms of biological role, this protein binds to 23S rRNA in the presence of protein L20. This Hamiltonella defensa subsp. Acyrthosiphon pisum (strain 5AT) protein is Large ribosomal subunit protein bL21.